The sequence spans 457 residues: Siroheme synthase (457 aa).

Positions 1-204 (MDHLPIFCQL…ADAKAVSEIT (204 aa)) are precorrin-2 dehydrogenase /sirohydrochlorin ferrochelatase. Residues 22 to 23 (DV) and 43 to 44 (LA) contribute to the NAD(+) site. Serine 128 carries the post-translational modification Phosphoserine. Residues 216–457 (GEVVLVGAGP…RDKLNWFSNH (242 aa)) form a uroporphyrinogen-III C-methyltransferase region. Residue proline 225 coordinates S-adenosyl-L-methionine. Aspartate 248 functions as the Proton acceptor in the catalytic mechanism. The active-site Proton donor is the lysine 270. S-adenosyl-L-methionine-binding positions include 301-303 (GGD), isoleucine 306, 331-332 (TA), methionine 382, and glycine 411.

The protein in the N-terminal section; belongs to the precorrin-2 dehydrogenase / sirohydrochlorin ferrochelatase family. This sequence in the C-terminal section; belongs to the precorrin methyltransferase family.

It catalyses the reaction uroporphyrinogen III + 2 S-adenosyl-L-methionine = precorrin-2 + 2 S-adenosyl-L-homocysteine + H(+). The catalysed reaction is precorrin-2 + NAD(+) = sirohydrochlorin + NADH + 2 H(+). It carries out the reaction siroheme + 2 H(+) = sirohydrochlorin + Fe(2+). Its pathway is cofactor biosynthesis; adenosylcobalamin biosynthesis; precorrin-2 from uroporphyrinogen III: step 1/1. It participates in cofactor biosynthesis; adenosylcobalamin biosynthesis; sirohydrochlorin from precorrin-2: step 1/1. The protein operates within porphyrin-containing compound metabolism; siroheme biosynthesis; precorrin-2 from uroporphyrinogen III: step 1/1. It functions in the pathway porphyrin-containing compound metabolism; siroheme biosynthesis; siroheme from sirohydrochlorin: step 1/1. Its pathway is porphyrin-containing compound metabolism; siroheme biosynthesis; sirohydrochlorin from precorrin-2: step 1/1. Its function is as follows. Multifunctional enzyme that catalyzes the SAM-dependent methylations of uroporphyrinogen III at position C-2 and C-7 to form precorrin-2 via precorrin-1. Then it catalyzes the NAD-dependent ring dehydrogenation of precorrin-2 to yield sirohydrochlorin. Finally, it catalyzes the ferrochelation of sirohydrochlorin to yield siroheme. This chain is Siroheme synthase, found in Citrobacter koseri (strain ATCC BAA-895 / CDC 4225-83 / SGSC4696).